Consider the following 87-residue polypeptide: Small ribosomal subunit protein bS20 (87 aa).

The segment at 1 to 24 is disordered; that stretch reads MANTAQARKRARQSVERNKHNSSL.

This sequence belongs to the bacterial ribosomal protein bS20 family.

Binds directly to 16S ribosomal RNA. This Bordetella petrii (strain ATCC BAA-461 / DSM 12804 / CCUG 43448) protein is Small ribosomal subunit protein bS20.